A 198-amino-acid chain; its full sequence is Dephospho-CoA kinase (198 aa).

The DPCK domain maps to 4-198 (IIGITGGIAS…DSQLRRLQNE (195 aa)). Residue 12 to 17 (ASGKST) coordinates ATP.

This sequence belongs to the CoaE family.

The protein resides in the cytoplasm. The enzyme catalyses 3'-dephospho-CoA + ATP = ADP + CoA + H(+). Its pathway is cofactor biosynthesis; coenzyme A biosynthesis; CoA from (R)-pantothenate: step 5/5. Catalyzes the phosphorylation of the 3'-hydroxyl group of dephosphocoenzyme A to form coenzyme A. This Streptococcus mutans serotype c (strain ATCC 700610 / UA159) protein is Dephospho-CoA kinase.